The chain runs to 124 residues: Kalata-B1 (124 aa).

Positions 1 to 22 (MAKFTVCLLLCLLLAAFVGAFG) are cleaved as a signal peptide. Residues 23–88 (SELSDSHKTT…QVFLKQLQLK (66 aa)) constitute a propeptide that is removed on maturation. The cyclopeptide (Gly-Asn) cross-link spans 89-117 (GLPVCGETCVGGTCNTPGCTCSWPVCTRN). Intrachain disulfides connect C93–C107, C97–C109, and C102–C114. Positions 118 to 124 (GLPSLAA) are excised as a propeptide.

Belongs to the cyclotide family. Moebius subfamily. In terms of processing, kalata-B1 is a cyclic peptide which occurs in three forms: with unmodified Trp-111, with Trp-111 oxidized to form oxindolylalanine and with Trp-111 oxidized to form N-formylkynurenine. Oxidation is enhanced by exposure to sunlight. In terms of tissue distribution, leaves and stems. Lower in roots.

Probably participates in a plant defense mechanism. Has antibiotic activity. Has a diuretic effect. Has a uterotonic effect in humans. Active against the Gram-positive S.aureus with a minimum inhibition concentration of approximately 0.2 microM. Relatively ineffective against Gram-negative bacteria such as E.coli and P.aeruginosa. Inhibitory effect on the growth and development of larvae from H.punctigera. The unmodified form has hemolytic activity, the oxidized form lacks hemolytic activity. If the protein is linearized, hemolytic activity is lost. The chain is Kalata-B1 (OAK1) from Oldenlandia affinis.